A 389-amino-acid polypeptide reads, in one-letter code: Inactive serine/threonine-protein kinase ZRK12 (389 aa).

The Protein kinase domain occupies 41–342 (SADEIRKATN…ETQFDSHQDI (302 aa)). Residues 47–55 (KATNNFGVS) and lysine 84 each bind ATP. Tyrosine 129 is modified (phosphotyrosine). Threonine 214 is subject to Phosphothreonine. Tyrosine 222 bears the Phosphotyrosine mark.

Belongs to the protein kinase superfamily. Ser/Thr protein kinase family.

Functionally, together with RPP13L4/ZAR1, involved in the regulation of the ambient temperature-sensitive intersection of growth and immune response in the absence of pathogens. The protein is Inactive serine/threonine-protein kinase ZRK12 of Arabidopsis thaliana (Mouse-ear cress).